The sequence spans 87 residues: Large ribosomal subunit protein eL20 (87 aa).

It belongs to the eukaryotic ribosomal protein eL20 family. As to quaternary structure, part of the 50S ribosomal subunit. Binds 23S rRNA.

In Hyperthermus butylicus (strain DSM 5456 / JCM 9403 / PLM1-5), this protein is Large ribosomal subunit protein eL20.